The chain runs to 360 residues: Putative FBD-associated F-box protein At5g56430 (360 aa).

In terms of domain architecture, F-box spans 1-53 (MRNISDLPNDLLVKILSLIPIKVAASTSLLSKRWGSVWKLIPTLDYDGTYSAA). Kelch repeat units follow at residues 140-186 (IRYT…EQLD) and 235-285 (VMCS…SVPE). The FBD domain occupies 276–326 (KWEQPNSVPECLLVSLETVKWILYKGTQEEKDVVKYLLKNGNFIKTMSIRF).

The chain is Putative FBD-associated F-box protein At5g56430 from Arabidopsis thaliana (Mouse-ear cress).